We begin with the raw amino-acid sequence, 385 residues long: Putative nickel insertion protein (385 aa).

Belongs to the LarC family.

This is Putative nickel insertion protein from Geobacter sp. (strain M21).